Here is a 123-residue protein sequence, read N- to C-terminus: MKHGIKALLITLSLACAGMSHSALAAASVAKPTAVETKAEAPAAQSKAAVPAKASDEEGTRVSINNASAEELARAMNGVGLKKAQAIVSYREEYGPFKTVEDLKQVPGMGNSLVERNLAVLTL.

Residues 1–25 form the signal peptide; sequence MKHGIKALLITLSLACAGMSHSALA. The segment covering 40 to 53 has biased composition (low complexity); the sequence is EAPAAQSKAAVPAK. A disordered region spans residues 40-62; that stretch reads EAPAAQSKAAVPAKASDEEGTRV. HhH domains lie at 60–90 and 91–120; these read TRVSINNASAEELARAMNGVGLKKAQAIVSY and REEYGPFKTVEDLKQVPGMGNSLVERNLAV.

This is an uncharacterized protein from Escherichia coli (strain K12).